The sequence spans 195 residues: Cysteine/O-acetylserine efflux protein (195 aa).

Over 1 to 7 the chain is Periplasmic; that stretch reads MTPTLLS. Residues 8 to 28 form a helical membrane-spanning segment; that stretch reads AFWTYTLITAMTPGPNNILAL. The Cytoplasmic portion of the chain corresponds to 29–46; the sequence is SSATTHGFHQSTRVLAGM. The chain crosses the membrane as a helical span at residues 47-67; the sequence is SLGFLIVMLLCAGISFSLAVI. Residues 68 to 69 are Periplasmic-facing; it reads DP. The chain crosses the membrane as a helical span at residues 70-90; it reads AAVHLLSWAGAAYIVWLAWKI. The Cytoplasmic portion of the chain corresponds to 91–104; the sequence is ATSPTKEDGLQTKP. The helical transmembrane segment at 105–125 threads the bilayer; the sequence is ISFWASFALQFVNVKIILYGV. The Periplasmic segment spans residues 126–141; sequence TALSTFVLPQTQALSW. The helical transmembrane segment at 142 to 162 threads the bilayer; it reads IVGVSVLLAMIGTFGNVCWAL. Over 163-176 the chain is Cytoplasmic; sequence AGHLFQRLFRQYGR. Residues 177-194 form a helical membrane-spanning segment; it reads QLNIVLALLLIYCAVRIF. Tyrosine 195 is a topological domain (periplasmic).

The protein belongs to the Rht family.

Its subcellular location is the cell inner membrane. The catalysed reaction is O-acetyl-L-serine(in) = O-acetyl-L-serine(out). It catalyses the reaction L-cysteine(in) = L-cysteine(out). Its function is as follows. Exporter of O-acetylserine (OAS) and cysteine. This is Cysteine/O-acetylserine efflux protein (eamB) from Escherichia coli O157:H7.